A 223-amino-acid polypeptide reads, in one-letter code: UPF0441 protein YgiB (223 aa).

The segment covering 178 to 195 has biased composition (low complexity); that stretch reads TVPKTAMAPKPATTTTVT. The tract at residues 178–223 is disordered; sequence TVPKTAMAPKPATTTTVTRGGFGESVAKQSTMQRSATGTSSRSMGG. A compositionally biased stretch (polar residues) spans 204-223; the sequence is AKQSTMQRSATGTSSRSMGG.

It belongs to the UPF0441 family.

The protein is UPF0441 protein YgiB of Shigella dysenteriae serotype 1 (strain Sd197).